Here is a 98-residue protein sequence, read N- to C-terminus: NADH-ubiquinone oxidoreductase chain 4L (98 aa).

Transmembrane regions (helical) follow at residues 1 to 21 (MPVV…GLLI), 29 to 49 (SLLC…VTVL), and 61 to 81 (IILL…LVMV).

It belongs to the complex I subunit 4L family. As to quaternary structure, core subunit of respiratory chain NADH dehydrogenase (Complex I) which is composed of 45 different subunits.

Its subcellular location is the mitochondrion inner membrane. The enzyme catalyses a ubiquinone + NADH + 5 H(+)(in) = a ubiquinol + NAD(+) + 4 H(+)(out). Core subunit of the mitochondrial membrane respiratory chain NADH dehydrogenase (Complex I) which catalyzes electron transfer from NADH through the respiratory chain, using ubiquinone as an electron acceptor. Part of the enzyme membrane arm which is embedded in the lipid bilayer and involved in proton translocation. This Ursus maritimus (Polar bear) protein is NADH-ubiquinone oxidoreductase chain 4L (MT-ND4L).